The sequence spans 199 residues: Imidazole glycerol phosphate synthase subunit HisH (199 aa).

The Glutamine amidotransferase type-1 domain occupies 3-199; it reads NITIIDTGCA…LKNFVEKVPF (197 aa). Catalysis depends on cysteine 78, which acts as the Nucleophile. Residues histidine 178 and glutamate 180 contribute to the active site.

In terms of assembly, heterodimer of HisH and HisF.

Its subcellular location is the cytoplasm. It carries out the reaction 5-[(5-phospho-1-deoxy-D-ribulos-1-ylimino)methylamino]-1-(5-phospho-beta-D-ribosyl)imidazole-4-carboxamide + L-glutamine = D-erythro-1-(imidazol-4-yl)glycerol 3-phosphate + 5-amino-1-(5-phospho-beta-D-ribosyl)imidazole-4-carboxamide + L-glutamate + H(+). It catalyses the reaction L-glutamine + H2O = L-glutamate + NH4(+). The protein operates within amino-acid biosynthesis; L-histidine biosynthesis; L-histidine from 5-phospho-alpha-D-ribose 1-diphosphate: step 5/9. IGPS catalyzes the conversion of PRFAR and glutamine to IGP, AICAR and glutamate. The HisH subunit catalyzes the hydrolysis of glutamine to glutamate and ammonia as part of the synthesis of IGP and AICAR. The resulting ammonia molecule is channeled to the active site of HisF. The chain is Imidazole glycerol phosphate synthase subunit HisH (hisH) from Haemophilus influenzae (strain ATCC 51907 / DSM 11121 / KW20 / Rd).